The following is a 372-amino-acid chain: Dual-specificity RNA methyltransferase RlmN (372 aa).

The active-site Proton acceptor is the Glu-94. The region spanning 100 to 339 (DGDRATLCVS…VTIRKTRGDD (240 aa)) is the Radical SAM core domain. Cys-107 and Cys-344 are joined by a disulfide. 3 residues coordinate [4Fe-4S] cluster: Cys-114, Cys-118, and Cys-121. Residues 168-169 (GE), Ser-200, 222-224 (SLH), and Asn-301 contribute to the S-adenosyl-L-methionine site. Cys-344 (S-methylcysteine intermediate) is an active-site residue.

The protein belongs to the radical SAM superfamily. RlmN family. [4Fe-4S] cluster is required as a cofactor.

Its subcellular location is the cytoplasm. It catalyses the reaction adenosine(2503) in 23S rRNA + 2 reduced [2Fe-2S]-[ferredoxin] + 2 S-adenosyl-L-methionine = 2-methyladenosine(2503) in 23S rRNA + 5'-deoxyadenosine + L-methionine + 2 oxidized [2Fe-2S]-[ferredoxin] + S-adenosyl-L-homocysteine. The enzyme catalyses adenosine(37) in tRNA + 2 reduced [2Fe-2S]-[ferredoxin] + 2 S-adenosyl-L-methionine = 2-methyladenosine(37) in tRNA + 5'-deoxyadenosine + L-methionine + 2 oxidized [2Fe-2S]-[ferredoxin] + S-adenosyl-L-homocysteine. Functionally, specifically methylates position 2 of adenine 2503 in 23S rRNA and position 2 of adenine 37 in tRNAs. m2A2503 modification seems to play a crucial role in the proofreading step occurring at the peptidyl transferase center and thus would serve to optimize ribosomal fidelity. The protein is Dual-specificity RNA methyltransferase RlmN of Aliivibrio fischeri (strain ATCC 700601 / ES114) (Vibrio fischeri).